A 354-amino-acid chain; its full sequence is Thiamine thiazole synthase 2, chloroplastic (354 aa).

Residues 1–44 constitute a chloroplast transit peptide; sequence MATTAASSLLKSSFAGSRLPSATRTTTPSSVAVATPRAGGGPIR. The tract at residues 17–49 is disordered; the sequence is SRLPSATRTTTPSSVAVATPRAGGGPIRASISS. Over residues 20 to 32 the composition is skewed to polar residues; the sequence is PSATRTTTPSSVA. Residues Ala-97, 117-118, Gly-125, and Val-190 each bind substrate; that span reads EQ. Cys-219 carries the 2,3-didehydroalanine (Cys) modification. Residues Asp-221, His-236, Met-288, and 298 to 300 each bind substrate; that span reads RMG.

It belongs to the THI4 family. In terms of assembly, homooctamer. The cofactor is Fe cation. Post-translationally, during the catalytic reaction, a sulfide is transferred from Cys-219 to a reaction intermediate, generating a dehydroalanine residue. Highest expression in developing embryos and green leaves and a very low level expression seen in endosperm, roots, etiolated shoots and immature ears.

It localises to the plastid. Its subcellular location is the chloroplast. It carries out the reaction [ADP-thiazole synthase]-L-cysteine + glycine + NAD(+) = [ADP-thiazole synthase]-dehydroalanine + ADP-5-ethyl-4-methylthiazole-2-carboxylate + nicotinamide + 3 H2O + 2 H(+). In terms of biological role, involved in biosynthesis of the thiamine precursor thiazole. Catalyzes the conversion of NAD and glycine to adenosine diphosphate 5-(2-hydroxyethyl)-4-methylthiazole-2-carboxylic acid (ADT), an adenylated thiazole intermediate. The reaction includes an iron-dependent sulfide transfer from a conserved cysteine residue of the protein to a thiazole intermediate. The enzyme can only undergo a single turnover, which suggests it is a suicide enzyme. May have additional roles in adaptation to various stress conditions and in DNA damage tolerance. The sequence is that of Thiamine thiazole synthase 2, chloroplastic from Zea mays (Maize).